A 500-amino-acid chain; its full sequence is NAD(P)H-quinone oxidoreductase chain 4, chloroplastic (500 aa).

14 helical membrane-spanning segments follow: residues 4 to 24 (FPWLTIIVVLPIFAGSLIFFL), 31 to 51 (VIFWYTICISILELLLTTYAF), 84 to 104 (GLSIGPILLTGFITTLATLAA), 111 to 131 (ARLFHFLMLVMYSGQIGLFSC), 134 to 154 (LLLFFLMWEFELIPVYLLLSM), 167 to 187 (FILYTAGGSVFLLMGALGIGL), 212 to 232 (IFYIGFFIAFAVKLPIIPLHT), 242 to 262 (HYSTCMLLAGILLKMGAYGLV), 272 to 292 (AHSLFSPWLMIVGAMQIIYAA), 308 to 328 (SSVSHMGFLIIGIGSITDIGL), 330 to 350 (GALLQIISHGFIGAALFFLAG), 386 to 406 (LALPGMSGFVTEFIVFFGLIT), 411 to 431 (LLMAKILIPFVMAIGIILTPI), and 462 to 482 (LFLSISIFLPILGIGLYPDFV).

It belongs to the complex I subunit 4 family.

The protein resides in the plastid. The protein localises to the chloroplast thylakoid membrane. It carries out the reaction a plastoquinone + NADH + (n+1) H(+)(in) = a plastoquinol + NAD(+) + n H(+)(out). The catalysed reaction is a plastoquinone + NADPH + (n+1) H(+)(in) = a plastoquinol + NADP(+) + n H(+)(out). The chain is NAD(P)H-quinone oxidoreductase chain 4, chloroplastic from Jasminum nudiflorum (Winter jasmine).